Reading from the N-terminus, the 360-residue chain is MKPSIVAKLEALHERHEEVQALLGDAGIIADQDRFRALSREYAQLSDVSRCFTDWQQVQDDIETAQMMLDDPEMREMAQEELREAKEKSEQLEQQLQVLLLPKDPDDERNAFLEVRAGTGGDEAALFAGDLFRMYSRYAESRRWRVEIMSMSEGEHGGYKEIIAKISGDGVYGRLKFESGGHRVQRVPATESQGRIHTSACTVAVMPELPEAELPDINPADLRIDTFRSSGAGGQHVNTTDSAIRITHLPTGIVVECQDERSQHKNKAKALSVLGARIHAAETAKRQQAEASTRRNLLGSGDRSDRNRTYNFPQGRVTDHRINLTLYRLDETMEGKLDMLIEPIVQEHQADLLAALSEQE.

Glutamine 235 is modified (N5-methylglutamine). Residues 284–313 form a disordered region; the sequence is AKRQQAEASTRRNLLGSGDRSDRNRTYNFP.

The protein belongs to the prokaryotic/mitochondrial release factor family. Post-translationally, methylated by PrmC. Methylation increases the termination efficiency of RF1.

The protein resides in the cytoplasm. In terms of biological role, peptide chain release factor 1 directs the termination of translation in response to the peptide chain termination codons UAG and UAA. This Salmonella schwarzengrund (strain CVM19633) protein is Peptide chain release factor 1.